A 31-amino-acid chain; its full sequence is Glucagon-3 (31 aa).

It belongs to the glucagon family.

It localises to the secreted. Its function is as follows. Glucagon plays a key role in glucose metabolism and homeostasis. Regulates blood glucose by increasing gluconeogenesis and decreasing glycolysis. The polypeptide is Glucagon-3 (Huso dauricus (Kaluga sturgeon)).